A 143-amino-acid polypeptide reads, in one-letter code: Large ribosomal subunit protein uL11 (143 aa).

The protein belongs to the universal ribosomal protein uL11 family. Part of the ribosomal stalk of the 50S ribosomal subunit. Interacts with L10 and the large rRNA to form the base of the stalk. L10 forms an elongated spine to which L12 dimers bind in a sequential fashion forming a multimeric L10(L12)X complex. In terms of processing, one or more lysine residues are methylated.

Its function is as follows. Forms part of the ribosomal stalk which helps the ribosome interact with GTP-bound translation factors. This Leifsonia xyli subsp. xyli (strain CTCB07) protein is Large ribosomal subunit protein uL11.